The sequence spans 123 residues: Large ribosomal subunit protein bL12 (123 aa).

It belongs to the bacterial ribosomal protein bL12 family. As to quaternary structure, homodimer. Part of the ribosomal stalk of the 50S ribosomal subunit. Forms a multimeric L10(L12)X complex, where L10 forms an elongated spine to which 2 to 4 L12 dimers bind in a sequential fashion. Binds GTP-bound translation factors.

Forms part of the ribosomal stalk which helps the ribosome interact with GTP-bound translation factors. Is thus essential for accurate translation. This is Large ribosomal subunit protein bL12 from Wigglesworthia glossinidia brevipalpis.